A 150-amino-acid chain; its full sequence is Protein adenylyltransferase MntA (150 aa).

The GSX(10)DXD motif signature appears at 32 to 46 (GSRATGNINANSDWD). Catalysis depends on residues Asp44 and Asp46. 3 residues coordinate Mg(2+): Asp44, Asp46, and Asp86.

Belongs to the MntA antitoxin family. As to quaternary structure, forms a complex with HepT, probably MntA(1):HepT(2) in vivo; can only be purified when both 'Arg-102' and 'Tyr-109' (or 'His-107' and 'Tyr-109') of HepThave been mutated. The fully di-AMPylated HepT homodimer is not found in a complex with MntA. The cofactor is Mg(2+).

It carries out the reaction L-tyrosyl-[protein] + ATP = O-(5'-adenylyl)-L-tyrosyl-[protein] + diphosphate. The enzyme catalyses O-(5'-adenylyl)-L-tyrosyl-[protein] + ATP = O-[5'-(adenylyl-(5'-&gt;3')-adenylyl)]-L-tyrosyl-[protein] + diphosphate. In terms of biological role, antitoxin component of a type VII toxin-antitoxin (TA) system. Upon cloning in E.coli neutralizes the effect of cognate toxin HepT. Neutralization is mostly due to di-AMPylation of toxin by this enzyme. Successively di-AMPylates HepT on 'Tyr-109'. In vitro will use ATP, dATP, GTP, dGTP, TTP or UTP to generate a mono-modified protein, but requires a purine nucleotide for the second modification reaction (ATP, dATP or GTP). The polypeptide is Protein adenylyltransferase MntA (Aphanizomenon flos-aquae (strain 2012/KM1/D3)).